Here is a 287-residue protein sequence, read N- to C-terminus: Transcription initiation factor IIB 1 (287 aa).

Residues 3–31 (HPHRCPECDGTIRETDTEHVCADCGLVVT) form a TFIIB-type zinc finger. Residues cysteine 7, cysteine 10, cysteine 23, and cysteine 26 each contribute to the Zn(2+) site. Positions 40–53 (EWRTFSDDPDHAPE) are enriched in basic and acidic residues. The interval 40 to 63 (EWRTFSDDPDHAPERTGAPLTRSR) is disordered. 2 consecutive repeat copies span residues 111–194 (TEIR…NRDL) and 205–286 (EYLP…NLTD).

It belongs to the TFIIB family.

Functionally, stabilizes TBP binding to an archaeal box-A promoter. Also responsible for recruiting RNA polymerase II to the pre-initiation complex (DNA-TBP-TFIIB). This chain is Transcription initiation factor IIB 1, found in Halobacterium salinarum (strain ATCC 700922 / JCM 11081 / NRC-1) (Halobacterium halobium).